Here is a 371-residue protein sequence, read N- to C-terminus: Transcriptional regulator of yeast form adherence 2 (371 aa).

The segment at 16 to 44 (RNPAVLCSFYSKIGACRHGEKCSKKHLKP) adopts a C3H1-type 1 zinc-finger fold. The segment covering 94 to 107 (TVSQIDDSPHSNSG) has biased composition (polar residues). The segment at 94–194 (TVSQIDDSPH…NIEDAKLEDT (101 aa)) is disordered. Over residues 115–124 (VETQEVETEN) the composition is skewed to acidic residues. Positions 132–194 (GDVKIDHNED…NIEDAKLEDT (63 aa)) are enriched in basic and acidic residues. An RRM domain is found at 192–279 (EDTEKDKLPE…KPVYSDLSPV (88 aa)). A C3H1-type 2 zinc finger spans residues 281 to 309 (DFNDACCEEYRDYHDCQRGAMCNYMHVRL). Residues 337–371 (ELPGDIRSSSSTNDDETNGNENGISSTMAVLEQLS) are disordered. Polar residues predominate over residues 355–371 (GNENGISSTMAVLEQLS).

It localises to the nucleus. In terms of biological role, transcription factor required for yeast cell adherence to silicone substrate. The chain is Transcriptional regulator of yeast form adherence 2 (TRY2) from Candida albicans (strain SC5314 / ATCC MYA-2876) (Yeast).